We begin with the raw amino-acid sequence, 316 residues long: GPI-specific phospholipase A2-like PGAP3 (316 aa).

An N-terminal signal peptide occupies residues M1 to G19. Over D20 to C97 the chain is Lumenal. Residue N36 is glycosylated (N-linked (GlcNAc...) asparagine). Residues F98–L118 traverse the membrane as a helical segment. At L119 to M131 the chain is on the cytoplasmic side. Residues Y132–F152 traverse the membrane as a helical segment. Over H153–Y165 the chain is Lumenal. Residues F166–L186 traverse the membrane as a helical segment. At R187–M194 the chain is on the cytoplasmic side. A helical membrane pass occupies residues V195–F215. Over D216–N220 the chain is Lumenal. The helical transmembrane segment at M221–L241 threads the bilayer. Residues N242–M254 are Cytoplasmic-facing. The helical transmembrane segment at V255 to W275 threads the bilayer. At V276–D278 the chain is on the lumenal side. Residues A279–I299 form a helical membrane-spanning segment. Residues D300 to D316 lie on the Cytoplasmic side of the membrane.

The protein belongs to the PGAP3 family.

Its subcellular location is the golgi apparatus membrane. Its function is as follows. Involved in the fatty acid remodeling steps of GPI-anchor maturation where the unsaturated acyl chain at sn-2 of inositol phosphate is replaced by a saturated stearoyl chain. May catalyze the first step of the fatty acid remodeling, by removing the unsaturated acyl chain at sn-2 of inositol phosphate, generating a lyso-GPI intermediate. The fatty acid remodeling steps is critical for the integration of GPI-APs into lipid rafts. The protein is GPI-specific phospholipase A2-like PGAP3 of Danio rerio (Zebrafish).